The following is a 330-amino-acid chain: 2-phospho-L-lactate transferase (330 aa).

Aspartate 49 provides a ligand contact to 7,8-didemethyl-8-hydroxy-5-deazariboflavin.

Belongs to the CofD family. In terms of assembly, homodimer. It depends on Mg(2+) as a cofactor.

The enzyme catalyses (2S)-lactyl-2-diphospho-5'-guanosine + 7,8-didemethyl-8-hydroxy-5-deazariboflavin = oxidized coenzyme F420-0 + GMP + H(+). The protein operates within cofactor biosynthesis; coenzyme F420 biosynthesis. In terms of biological role, catalyzes the transfer of the 2-phospholactate moiety from (2S)-lactyl-2-diphospho-5'-guanosine to 7,8-didemethyl-8-hydroxy-5-deazariboflavin (FO) with the formation of oxidized coenzyme F420-0 and GMP. The chain is 2-phospho-L-lactate transferase from Haloarcula marismortui (strain ATCC 43049 / DSM 3752 / JCM 8966 / VKM B-1809) (Halobacterium marismortui).